A 505-amino-acid polypeptide reads, in one-letter code: Serine/threonine-protein kinase D (505 aa).

The 263-residue stretch at 9 to 271 (YEIVKSLGSG…AMYQALHSLI (263 aa)) folds into the Protein kinase domain. ATP-binding positions include 15 to 23 (LGSGGFGDT) and Lys-40. Asp-136 serves as the catalytic Proton acceptor. The region spanning 436–505 (GASATIGGIP…GWIASQLVNF (70 aa)) is the SH3b domain.

It belongs to the protein kinase superfamily. Ser/Thr protein kinase family.

It catalyses the reaction L-seryl-[protein] + ATP = O-phospho-L-seryl-[protein] + ADP + H(+). The catalysed reaction is L-threonyl-[protein] + ATP = O-phospho-L-threonyl-[protein] + ADP + H(+). The chain is Serine/threonine-protein kinase D (spkD) from Synechocystis sp. (strain ATCC 27184 / PCC 6803 / Kazusa).